The primary structure comprises 276 residues: Putative phosphoenolpyruvate synthase regulatory protein (276 aa).

An ADP-binding site is contributed by 156 to 163; that stretch reads GVSRSGKT.

This sequence belongs to the pyruvate, phosphate/water dikinase regulatory protein family. PSRP subfamily.

It catalyses the reaction [pyruvate, water dikinase] + ADP = [pyruvate, water dikinase]-phosphate + AMP + H(+). It carries out the reaction [pyruvate, water dikinase]-phosphate + phosphate + H(+) = [pyruvate, water dikinase] + diphosphate. Bifunctional serine/threonine kinase and phosphorylase involved in the regulation of the phosphoenolpyruvate synthase (PEPS) by catalyzing its phosphorylation/dephosphorylation. The protein is Putative phosphoenolpyruvate synthase regulatory protein of Acidovorax ebreus (strain TPSY) (Diaphorobacter sp. (strain TPSY)).